Consider the following 654-residue polypeptide: Tetracycline resistance protein TetQ (654 aa).

The 244-residue stretch at 1 to 244 (MNIINLGILA…AISSFILPPE (244 aa)) folds into the tr-type G domain. GTP is bound by residues 10 to 17 (AHIDAGKT), 74 to 78 (DTPGH), and 128 to 131 (NKID).

It belongs to the TRAFAC class translation factor GTPase superfamily. Classic translation factor GTPase family. TetM/TetO subfamily.

Functionally, abolishes the inhibitory effect of tetracyclin on protein synthesis by a non-covalent modification of the ribosomes. This chain is Tetracycline resistance protein TetQ (tetQ), found in Prevotella intermedia.